Consider the following 354-residue polypeptide: S-adenosylmethionine:tRNA ribosyltransferase-isomerase (354 aa).

This sequence belongs to the QueA family. As to quaternary structure, monomer.

It is found in the cytoplasm. The catalysed reaction is 7-aminomethyl-7-carbaguanosine(34) in tRNA + S-adenosyl-L-methionine = epoxyqueuosine(34) in tRNA + adenine + L-methionine + 2 H(+). Its pathway is tRNA modification; tRNA-queuosine biosynthesis. In terms of biological role, transfers and isomerizes the ribose moiety from AdoMet to the 7-aminomethyl group of 7-deazaguanine (preQ1-tRNA) to give epoxyqueuosine (oQ-tRNA). The polypeptide is S-adenosylmethionine:tRNA ribosyltransferase-isomerase (Pseudomonas savastanoi pv. phaseolicola (strain 1448A / Race 6) (Pseudomonas syringae pv. phaseolicola (strain 1448A / Race 6))).